A 386-amino-acid chain; its full sequence is Formate-dependent phosphoribosylglycinamide formyltransferase (386 aa).

Residues 15–16 (EL) and glutamate 75 contribute to the N(1)-(5-phospho-beta-D-ribosyl)glycinamide site. Residues arginine 107, lysine 148, 153–158 (SSGKGQ), 188–191 (EQFI), and glutamate 196 each bind ATP. The ATP-grasp domain maps to 112-301 (ALAAQQLNLQ…EFELHLRAIV (190 aa)). Residues glutamate 260 and glutamate 272 each coordinate Mg(2+). N(1)-(5-phospho-beta-D-ribosyl)glycinamide is bound by residues aspartate 279, lysine 349, and 356–357 (RR).

The protein belongs to the PurK/PurT family. In terms of assembly, homodimer.

It carries out the reaction N(1)-(5-phospho-beta-D-ribosyl)glycinamide + formate + ATP = N(2)-formyl-N(1)-(5-phospho-beta-D-ribosyl)glycinamide + ADP + phosphate + H(+). It functions in the pathway purine metabolism; IMP biosynthesis via de novo pathway; N(2)-formyl-N(1)-(5-phospho-D-ribosyl)glycinamide from N(1)-(5-phospho-D-ribosyl)glycinamide (formate route): step 1/1. Its function is as follows. Involved in the de novo purine biosynthesis. Catalyzes the transfer of formate to 5-phospho-ribosyl-glycinamide (GAR), producing 5-phospho-ribosyl-N-formylglycinamide (FGAR). Formate is provided by PurU via hydrolysis of 10-formyl-tetrahydrofolate. In Francisella tularensis subsp. novicida (strain U112), this protein is Formate-dependent phosphoribosylglycinamide formyltransferase.